A 176-amino-acid polypeptide reads, in one-letter code: Large ribosomal subunit protein uL22 (176 aa).

The interval 113–176 (VVESRPSKDQ…ETSEAKGGSD (64 aa)) is disordered. Low complexity predominate over residues 136 to 152 (SKAAATAPAKKSSASKA). The segment covering 159–176 (TKAESKTSETSEAKGGSD) has biased composition (basic and acidic residues).

Belongs to the universal ribosomal protein uL22 family. In terms of assembly, part of the 50S ribosomal subunit.

This protein binds specifically to 23S rRNA; its binding is stimulated by other ribosomal proteins, e.g. L4, L17, and L20. It is important during the early stages of 50S assembly. It makes multiple contacts with different domains of the 23S rRNA in the assembled 50S subunit and ribosome. In terms of biological role, the globular domain of the protein is located near the polypeptide exit tunnel on the outside of the subunit, while an extended beta-hairpin is found that lines the wall of the exit tunnel in the center of the 70S ribosome. The sequence is that of Large ribosomal subunit protein uL22 from Mycobacterium marinum (strain ATCC BAA-535 / M).